The chain runs to 421 residues: Serine--tRNA ligase (421 aa).

An L-serine-binding site is contributed by 229–231 (TSE). ATP-binding positions include 260–262 (RKE) and valine 276. L-serine is bound at residue glutamate 283. An ATP-binding site is contributed by 347-350 (EIVS). Residue threonine 383 participates in L-serine binding.

This sequence belongs to the class-II aminoacyl-tRNA synthetase family. Type-1 seryl-tRNA synthetase subfamily. In terms of assembly, homodimer. The tRNA molecule binds across the dimer.

It is found in the cytoplasm. The enzyme catalyses tRNA(Ser) + L-serine + ATP = L-seryl-tRNA(Ser) + AMP + diphosphate + H(+). It carries out the reaction tRNA(Sec) + L-serine + ATP = L-seryl-tRNA(Sec) + AMP + diphosphate + H(+). It participates in aminoacyl-tRNA biosynthesis; selenocysteinyl-tRNA(Sec) biosynthesis; L-seryl-tRNA(Sec) from L-serine and tRNA(Sec): step 1/1. Functionally, catalyzes the attachment of serine to tRNA(Ser). Is also able to aminoacylate tRNA(Sec) with serine, to form the misacylated tRNA L-seryl-tRNA(Sec), which will be further converted into selenocysteinyl-tRNA(Sec). The polypeptide is Serine--tRNA ligase (Nitrosopumilus maritimus (strain SCM1)).